Consider the following 129-residue polypeptide: SOSS complex subunit C homolog (129 aa).

The tract at residues 105–129 is disordered; it reads RLEPLPSPATTPTTPNAPPSHSISK.

The protein belongs to the SOSS-C family.

This Drosophila simulans (Fruit fly) protein is SOSS complex subunit C homolog.